Reading from the N-terminus, the 564-residue chain is Pyruvate decarboxylase (564 aa).

Residues Asp28 and His115 each contribute to the pyruvate site. Thiamine diphosphate-binding positions include Thr390 and 413-415 (GSI). Asp444 provides a ligand contact to Mg(2+). Thiamine diphosphate is bound by residues 445-446 (GS) and 471-476 (NNGYTI). Mg(2+)-binding residues include Asn471 and Gly473. Glu477 is a pyruvate binding site.

The protein belongs to the TPP enzyme family. As to quaternary structure, homotetramer. Mg(2+) serves as cofactor. Thiamine diphosphate is required as a cofactor.

It carries out the reaction a 2-oxocarboxylate + H(+) = an aldehyde + CO2. The catalysed reaction is pyruvate + H(+) = acetaldehyde + CO2. In Hanseniaspora uvarum (Yeast), this protein is Pyruvate decarboxylase (PDC).